The following is a 458-amino-acid chain: MTFRKSFDCYDFYDRAKVGEKCTQDDWDLMKIPMKAMELKQKYGLDFKGEFVPTDRDMMEKLFQAGFEMLLECGIYCTDTHRIVKYTEDEIWDAINNVQKEFTLGTGRDAVNVRKRSVGDKRKPIVQGGPTGSPISEDVFMPVHMSYALEKEVDTIVDGVMTSVRGKPPVPKSPYEVLAAKTEARLIKQACAMAGRPGMGIOGPETSLSAQGNISSDCVGGQISSDSHEVSQLNELKIDLDAIAVIAHYKGNSDIIMDEQMPIFGGYAGGIEETTIVDVATHINAFVMSSASWHLDGPVHIRWGSTNTRETLTIAGWACATISEFTDILSGNQYYPCAGPCTEMCLLEASAQSITDTASGREILSGVASAKGVVTDKTTGMEARMMGEVARATAGVEISEINKILDKLVALYEKNYANAPAGKTFQECYDVKTVTPTEEYMHVYDGARKKLEDLGLVF.

Position 202 (Pyl-202) is a non-standard amino acid, pyrrolysine.

Belongs to the monomethylamine methyltransferase family. As to quaternary structure, can form a complex with MtmC.

It catalyses the reaction Co(I)-[methylamine-specific corrinoid protein] + methylamine + H(+) = methyl-Co(III)-[methylamine-specific corrinoid protein] + NH4(+). It functions in the pathway one-carbon metabolism; methanogenesis from methylamine. In terms of biological role, catalyzes the transfer of the methyl group from monomethylamine to the corrinoid cofactor of MtmC. This Methanosarcina acetivorans (strain ATCC 35395 / DSM 2834 / JCM 12185 / C2A) protein is Monomethylamine methyltransferase MtmB1 (mtmB1).